We begin with the raw amino-acid sequence, 342 residues long: S-adenosylmethionine:tRNA ribosyltransferase-isomerase (342 aa).

The protein belongs to the QueA family. Monomer.

Its subcellular location is the cytoplasm. It catalyses the reaction 7-aminomethyl-7-carbaguanosine(34) in tRNA + S-adenosyl-L-methionine = epoxyqueuosine(34) in tRNA + adenine + L-methionine + 2 H(+). Its pathway is tRNA modification; tRNA-queuosine biosynthesis. In terms of biological role, transfers and isomerizes the ribose moiety from AdoMet to the 7-aminomethyl group of 7-deazaguanine (preQ1-tRNA) to give epoxyqueuosine (oQ-tRNA). This is S-adenosylmethionine:tRNA ribosyltransferase-isomerase from Streptococcus pneumoniae serotype 19F (strain G54).